Reading from the N-terminus, the 400-residue chain is Leukosialin (400 aa).

An N-terminal signal peptide occupies residues 1–19 (MATLLLLLGVLVVSPDALG). Residues 20-253 (STTAVQTPTS…PFRNPDENSR (234 aa)) are Extracellular-facing. O-linked (GalNAc...) threonine glycans are attached at residues T21, T22, T26, and T28. Composition is skewed to polar residues over residues 21–51 (TTAV…SITS) and 58–112 (TGDQ…TPHA). The tract at residues 21-224 (TTAVQTPTSG…SSGASGPQVS (204 aa)) is disordered. O-linked (GalNAc...) serine glycosylation is found at S29 and S35. O-linked (GalNAc...) threonine glycosylation occurs at T36. 3 O-linked (GalNAc...) serine glycosylation sites follow: S37, S41, and S42. Residues T46 and T47 are each glycosylated (O-linked (GalNAc...) threonine). The O-linked (GalNAc...) serine glycan is linked to S48. O-linked (GalNAc...) threonine glycosylation is found at T50, T58, and T69. 2 O-linked (GalNAc...) serine glycosylation sites follow: S99 and S103. O-linked (GalNAc...) threonine glycans are attached at residues T109 and T113. The O-linked (GalNAc...) serine glycan is linked to S114. Polar residues-rich tracts occupy residues 121–164 (TANS…SRGT) and 172–182 (ATVSLETSKGT). O-linked (GalNAc...) threonine glycosylation is found at T136, T137, T173, and T178. Residues 196–211 (TSTGTTGPPVTMTTGS) show a composition bias toward low complexity. The span at 212–224 (LEPSSGASGPQVS) shows a compositional bias: polar residues. The N-linked (GlcNAc...) asparagine glycan is linked to N239. Residues 254–276 (GMLPVAVLVALLAVIVLVALLLL) traverse the membrane as a helical segment. Topologically, residues 277–400 (WRRRQKRRTG…EPEGGDGAAP (124 aa)) are cytoplasmic. Positions 278 to 308 (RRRQKRRTGALVLSRGGKRNGVVDAWAGPAQ) are required for interaction with EZR, MSN and RDX and for co-localization to microvilli. The Nuclear localization signal motif lies at 282–296 (KRRTGALVLSRGGKR). S291 bears the Phosphoserine mark. Positions 320–332 (GGSGGDKGSGFPD) are enriched in gly residues. The interval 320–400 (GGSGGDKGSG…EPEGGDGAAP (81 aa)) is disordered. S336 carries the post-translational modification Phosphoserine. T341 is modified (phosphothreonine). Position 351 is a phosphoserine (S351). S355 bears the Phosphoserine; by PKC/PRKCQ mark. Residues S368 and S379 each carry the phosphoserine modification.

In terms of assembly, interacts with SIGLEC1. Monomer. Interacts with CTNNB1. Interacts with RDX (via FERM domain), EZR and MSN. Glycosylated; has a high content of sialic acid and O-linked carbohydrate structures. Post-translationally, phosphorylation at Ser-355 is regulated by chemokines, requires its association with ERM proteins (EZR, RDX and MSN) and is essential for its function in the regulation of T-cell trafficking to lymph nodes. In terms of processing, has a high content of sialic acid and O-linked carbohydrate structures. Cleavage by CTSG releases its extracellular domain and triggers its intramembrane proteolysis by gamma-secretase releasing the CD43 cytoplasmic tail chain (CD43-ct) which translocates to the nucleus. Post-translationally, sumoylated. In terms of tissue distribution, cell surface of thymocytes, T-lymphocytes, neutrophils, plasma cells and myelomas.

The protein localises to the membrane. It localises to the cell projection. Its subcellular location is the microvillus. The protein resides in the uropodium. It is found in the nucleus. The protein localises to the PML body. Predominant cell surface sialoprotein of leukocytes which regulates multiple T-cell functions, including T-cell activation, proliferation, differentiation, trafficking and migration. Positively regulates T-cell trafficking to lymph-nodes via its association with ERM proteins (EZR, RDX and MSN). Negatively regulates Th2 cell differentiation and predisposes the differentiation of T-cells towards a Th1 lineage commitment. Promotes the expression of IFN-gamma by T-cells during T-cell receptor (TCR) activation of naive cells and induces the expression of IFN-gamma by CD4(+) T-cells and to a lesser extent by CD8(+) T-cells. Plays a role in preparing T-cells for cytokine sensing and differentiation into effector cells by inducing the expression of cytokine receptors IFNGR and IL4R, promoting IFNGR and IL4R signaling and by mediating the clustering of IFNGR with TCR. Acts as a major E-selectin ligand responsible for Th17 cell rolling on activated vasculature and recruitment during inflammation. Mediates Th17 cells, but not Th1 cells, adhesion to E-selectin. Acts as a T-cell counter-receptor for SIGLEC1. In terms of biological role, protects cells from apoptotic signals, promoting cell survival. The sequence is that of Leukosialin (SPN) from Homo sapiens (Human).